The chain runs to 755 residues: Elongation factor G, mitochondrial (755 aa).

Residues 1–38 (MFKRVGLIAGIAGPVAGSSRFSAVSFSKRAFSASSKRC) constitute a mitochondrion transit peptide. Positions 63-344 (KKLRNIGISA…AIVEYLPNPS (282 aa)) constitute a tr-type G domain. Residues 72-79 (AHIDSGKT), 143-147 (DTPGH), and 197-200 (NKMD) each bind GTP.

It belongs to the TRAFAC class translation factor GTPase superfamily. Classic translation factor GTPase family. EF-G/EF-2 subfamily.

The protein resides in the mitochondrion. It functions in the pathway protein biosynthesis; polypeptide chain elongation. In terms of biological role, mitochondrial GTPase that catalyzes the GTP-dependent ribosomal translocation step during translation elongation. During this step, the ribosome changes from the pre-translocational (PRE) to the post-translocational (POST) state as the newly formed A-site-bound peptidyl-tRNA and P-site-bound deacylated tRNA move to the P and E sites, respectively. Catalyzes the coordinated movement of the two tRNA molecules, the mRNA and conformational changes in the ribosome. The chain is Elongation factor G, mitochondrial from Kluyveromyces lactis (strain ATCC 8585 / CBS 2359 / DSM 70799 / NBRC 1267 / NRRL Y-1140 / WM37) (Yeast).